The chain runs to 120 residues: Large ribosomal subunit protein bL21 (120 aa).

This sequence belongs to the bacterial ribosomal protein bL21 family. Part of the 50S ribosomal subunit. Contacts protein L20.

This protein binds to 23S rRNA in the presence of protein L20. This Roseiflexus sp. (strain RS-1) protein is Large ribosomal subunit protein bL21.